The chain runs to 856 residues: Facilitated trehalose transporter Tret1 (856 aa).

Disordered regions lie at residues Met-1–Lys-29 and Asp-62–Ser-202. The Cytoplasmic portion of the chain corresponds to Met-1 to Pro-389. Residues Val-69–Thr-80 show a composition bias toward polar residues. Residues Glu-133–Gln-142 are compositionally biased toward basic and acidic residues. The segment covering Gly-170 to Ala-180 has biased composition (polar residues). Phosphoserine occurs at positions 247, 248, 249, 319, and 321. The disordered stretch occupies residues Leu-326 to Ser-345. Polar residues predominate over residues Arg-329–Thr-340. The helical transmembrane segment at Ile-390–Gly-410 threads the bilayer. Topologically, residues Phe-411–Ser-439 are extracellular. The N-linked (GlcNAc...) asparagine glycan is linked to Asn-427. Residues Trp-440 to Ile-460 form a helical membrane-spanning segment. Residues Glu-461–Thr-472 lie on the Cytoplasmic side of the membrane. A helical transmembrane segment spans residues Ala-473 to Leu-493. Residues Cys-494 to Arg-496 lie on the Extracellular side of the membrane. A helical membrane pass occupies residues Phe-497 to Thr-517. Topologically, residues Val-518–Gly-527 are cytoplasmic. A helical transmembrane segment spans residues Leu-528–Met-548. An N-linked (GlcNAc...) asparagine glycan is attached at Asn-549. The Extracellular segment spans residues Asn-549 to Ser-551. Residues Met-552–Pro-572 traverse the membrane as a helical segment. Residues Glu-573–Pro-635 lie on the Cytoplasmic side of the membrane. Residues Leu-636–Phe-656 form a helical membrane-spanning segment. The Extracellular segment spans residues Tyr-657–Asn-672. A helical transmembrane segment spans residues Val-673–Ile-693. The Cytoplasmic segment spans residues Asp-694–Lys-699. Residues Ile-700 to Phe-720 traverse the membrane as a helical segment. Residues Tyr-721–Cys-739 lie on the Extracellular side of the membrane. Residues Phe-740–Gly-760 form a helical membrane-spanning segment. Residues Glu-761–Lys-766 lie on the Cytoplasmic side of the membrane. Residues Ile-767–Thr-787 traverse the membrane as a helical segment. The Extracellular portion of the chain corresponds to Lys-788–His-800. The chain crosses the membrane as a helical span at residues Gly-801 to Val-821. Residues Pro-822–Met-856 lie on the Cytoplasmic side of the membrane. Residues Ser-844 and Ser-845 each carry the phosphoserine modification.

The protein belongs to the major facilitator superfamily. Sugar transporter (TC 2.A.1.1) family. Trehalose transporter subfamily.

It is found in the cell membrane. Low-capacity facilitative transporter for trehalose. Does not transport maltose, sucrose or lactose. Mediates the bidirectional transfer of trehalose. Responsible for the transport of trehalose synthesized in the fat body and the incorporation of trehalose into other tissues that require a carbon source, thereby regulating trehalose levels in the hemolymph. This is Facilitated trehalose transporter Tret1 from Drosophila yakuba (Fruit fly).